The sequence spans 426 residues: Glutamate-1-semialdehyde 2,1-aminomutase (426 aa).

An N6-(pyridoxal phosphate)lysine modification is found at Lys-265.

It belongs to the class-III pyridoxal-phosphate-dependent aminotransferase family. HemL subfamily. As to quaternary structure, homodimer. The cofactor is pyridoxal 5'-phosphate.

It is found in the cytoplasm. The catalysed reaction is (S)-4-amino-5-oxopentanoate = 5-aminolevulinate. It functions in the pathway porphyrin-containing compound metabolism; protoporphyrin-IX biosynthesis; 5-aminolevulinate from L-glutamyl-tRNA(Glu): step 2/2. The polypeptide is Glutamate-1-semialdehyde 2,1-aminomutase (Marinobacter nauticus (strain ATCC 700491 / DSM 11845 / VT8) (Marinobacter aquaeolei)).